A 146-amino-acid polypeptide reads, in one-letter code: D-aminoacyl-tRNA deacylase (146 aa).

Residues 137–138 (GP) carry the Gly-cisPro motif, important for rejection of L-amino acids motif.

This sequence belongs to the DTD family. As to quaternary structure, homodimer.

It localises to the cytoplasm. The enzyme catalyses glycyl-tRNA(Ala) + H2O = tRNA(Ala) + glycine + H(+). It carries out the reaction a D-aminoacyl-tRNA + H2O = a tRNA + a D-alpha-amino acid + H(+). Functionally, an aminoacyl-tRNA editing enzyme that deacylates mischarged D-aminoacyl-tRNAs. Also deacylates mischarged glycyl-tRNA(Ala), protecting cells against glycine mischarging by AlaRS. Acts via tRNA-based rather than protein-based catalysis; rejects L-amino acids rather than detecting D-amino acids in the active site. By recycling D-aminoacyl-tRNA to D-amino acids and free tRNA molecules, this enzyme counteracts the toxicity associated with the formation of D-aminoacyl-tRNA entities in vivo and helps enforce protein L-homochirality. In Hahella chejuensis (strain KCTC 2396), this protein is D-aminoacyl-tRNA deacylase.